We begin with the raw amino-acid sequence, 137 residues long: Large ribosomal subunit protein uL16 (137 aa).

It belongs to the universal ribosomal protein uL16 family. In terms of assembly, part of the 50S ribosomal subunit.

Its function is as follows. Binds 23S rRNA and is also seen to make contacts with the A and possibly P site tRNAs. The chain is Large ribosomal subunit protein uL16 from Cellvibrio japonicus (strain Ueda107) (Pseudomonas fluorescens subsp. cellulosa).